The primary structure comprises 1161 residues: Immunoglobulin superfamily member 3 (1161 aa).

The signal sequence occupies residues 1–16 (MGTAALLILLAGVSWA). Topologically, residues 17–1091 (QREVAIQPGP…LQSTICANDA (1075 aa)) are extracellular. Ig-like C2-type domains are found at residues 18-135 (REVA…AKVN), 140-258 (PDTL…WFPL), 272-382 (PTDK…RGPS), 402-523 (PLRT…WQLL), 541-651 (FAVT…RETS), 674-796 (PRLQ…EETS), 806-930 (PDAN…WYRR), and 947-1063 (PQLQ…WYLL). Disulfide bonds link Cys-39–Cys-117 and Cys-164–Cys-242. An EWI motif motif is present at residues 246–248 (EWI). Cystine bridges form between Cys-298–Cys-372, Cys-428–Cys-507, Cys-562–Cys-641, Cys-697–Cys-775, Cys-831–Cys-914, and Cys-970–Cys-1047. The helical transmembrane segment at 1092–1112 (LFYLVFFYPFPIFGILIITIL) threads the bilayer. The Cytoplasmic segment spans residues 1113–1161 (LVRFRHRPTGKPGEGKNGVPLLWIKEPHLNYSPTCLEPPVLSIHPGTID).

Its subcellular location is the membrane. This is Immunoglobulin superfamily member 3 (igsf3) from Xenopus tropicalis (Western clawed frog).